Here is a 157-residue protein sequence, read N- to C-terminus: Tripartite terminase subunit 2 (157 aa).

The tract at residues 1-69 (MSWAKQRVPF…DGEDGHALPD (69 aa)) is disordered. Over residues 11–27 (LDDDDGEEENDVQDDVD) the composition is skewed to acidic residues.

It belongs to the herpesviridae TRM2 protein family. As to quaternary structure, associates with TRM1 and TRM3 to form the tripartite terminase complex.

It localises to the host nucleus. Its function is as follows. Component of the molecular motor that translocates viral genomic DNA in empty capsid during DNA packaging. Forms a tripartite terminase complex together with TRM1 and TRM3 in the host cytoplasm. Once the complex reaches the host nucleus, it interacts with the capsid portal vertex. This portal forms a ring in which genomic DNA is translocated into the capsid. This chain is Tripartite terminase subunit 2, found in Homo sapiens (Human).